The chain runs to 196 residues: Recombination protein RecR (196 aa).

Residues 57–72 (CERCHTFTEGAVCETC) form a C4-type zinc finger. Positions 80–175 (TRLCVVETPA…HVTRLARGVP (96 aa)) constitute a Toprim domain.

It belongs to the RecR family.

May play a role in DNA repair. It seems to be involved in an RecBC-independent recombinational process of DNA repair. It may act with RecF and RecO. The polypeptide is Recombination protein RecR (Acidovorax sp. (strain JS42)).